We begin with the raw amino-acid sequence, 118 residues long: Histone H2B.N (118 aa).

The protein belongs to the histone H2B family. As to quaternary structure, the nucleosome is a histone octamer containing two molecules each of H2A, H2B, H3 and H4 assembled in one H3-H4 heterotetramer and two H2A-H2B heterodimers. The octamer wraps approximately 147 bp of DNA. Expressed in germline. Predominantly expressed in oocytes.

Its subcellular location is the nucleus. The protein resides in the chromosome. Core component of nucleosome. Nucleosomes wrap and compact DNA into chromatin, limiting DNA accessibility to the cellular machineries which require DNA as a template. Histones thereby play a central role in transcription regulation, DNA repair, DNA replication and chromosomal stability. DNA accessibility is regulated via a complex set of post-translational modifications of histones, also called histone code, and nucleosome remodeling. The protein is Histone H2B.N of Homo sapiens (Human).